The chain runs to 328 residues: Cell division protein ZipA (328 aa).

The Periplasmic portion of the chain corresponds to 1–4 (MDLN). A helical membrane pass occupies residues 5-25 (TILIIVGIVALVALIVHGLWS). Topologically, residues 26-328 (NRREKSKYFD…NAEQAYLARV (303 aa)) are cytoplasmic. The segment at 43–82 (TSLTSRSHTQEEMAQPNNISPNTYVENGHTPIPQPTTEKV) is disordered. Residues 57-67 (QPNNISPNTYV) show a composition bias toward polar residues.

Belongs to the ZipA family. Interacts with FtsZ via their C-terminal domains.

It is found in the cell inner membrane. Functionally, essential cell division protein that stabilizes the FtsZ protofilaments by cross-linking them and that serves as a cytoplasmic membrane anchor for the Z ring. Also required for the recruitment to the septal ring of downstream cell division proteins. The polypeptide is Cell division protein ZipA (Haemophilus influenzae (strain PittEE)).